Consider the following 436-residue polypeptide: 3-ketoacyl-CoA thiolase (436 aa).

Cysteine 99 serves as the catalytic Acyl-thioester intermediate. Residues histidine 392 and cysteine 422 each act as proton acceptor in the active site.

It belongs to the thiolase-like superfamily. Thiolase family. In terms of assembly, heterotetramer of two alpha chains (FadJ) and two beta chains (FadI).

It is found in the cytoplasm. It catalyses the reaction an acyl-CoA + acetyl-CoA = a 3-oxoacyl-CoA + CoA. It participates in lipid metabolism; fatty acid beta-oxidation. Its function is as follows. Catalyzes the final step of fatty acid oxidation in which acetyl-CoA is released and the CoA ester of a fatty acid two carbons shorter is formed. The polypeptide is 3-ketoacyl-CoA thiolase (Serratia proteamaculans (strain 568)).